We begin with the raw amino-acid sequence, 350 residues long: Transmembrane protein 185A (350 aa).

The next 7 helical transmembrane spans lie at 16–36 (LIYACLLLFSVLLALRLDGII), 41–61 (WAVFAPIWLWKLMVIVGASVG), 81–101 (FKAMLIAVGIHLLLLMFEVLV), 111–131 (FWLLVFMPLFFVSPVSVAACV), 177–197 (ILMSFLCLVVLYYIVWSVLFL), 211–231 (ITMALSWMTIVVPLLTFEILL), and 240–260 (AFSCIPIFVPLWLSLITLMAT). Residues 298–350 (DLHHEDNEETEETPVPEPPKIAPMFRKKARVVITQSPGKYALPPPKLNIEMPD) are mediates interaction with MAP1B.

This sequence belongs to the TMEM185 family. Interacts with MAP1B.

Its subcellular location is the cell projection. It localises to the dendrite. The protein resides in the membrane. This chain is Transmembrane protein 185A (TMEM185A), found in Pongo abelii (Sumatran orangutan).